We begin with the raw amino-acid sequence, 511 residues long: Histidine ammonia-lyase (511 aa).

Residues alanine 142 to glycine 144 constitute a cross-link (5-imidazolinone (Ala-Gly)). Position 143 is a 2,3-didehydroalanine (Ser) (serine 143).

This sequence belongs to the PAL/histidase family. Contains an active site 4-methylidene-imidazol-5-one (MIO), which is formed autocatalytically by cyclization and dehydration of residues Ala-Ser-Gly.

The protein localises to the cytoplasm. The enzyme catalyses L-histidine = trans-urocanate + NH4(+). It functions in the pathway amino-acid degradation; L-histidine degradation into L-glutamate; N-formimidoyl-L-glutamate from L-histidine: step 1/3. This Brucella abortus (strain S19) protein is Histidine ammonia-lyase.